Here is a 188-residue protein sequence, read N- to C-terminus: Probable manganese efflux pump MntP (188 aa).

The next 5 membrane-spanning stretches (helical) occupy residues 3–23 (ITAT…ASIG), 66–86 (LEWN…RMII), 106–128 (WLLV…GLAF), 143–163 (ATLI…SIIG), and 168–188 (ILGG…HFHG).

It belongs to the MntP (TC 9.B.29) family.

The protein localises to the cell inner membrane. Its function is as follows. Probably functions as a manganese efflux pump. In Shigella flexneri serotype 5b (strain 8401), this protein is Probable manganese efflux pump MntP.